The primary structure comprises 116 residues: Large ribosomal subunit protein bL20 (116 aa).

This sequence belongs to the bacterial ribosomal protein bL20 family.

In terms of biological role, binds directly to 23S ribosomal RNA and is necessary for the in vitro assembly process of the 50S ribosomal subunit. It is not involved in the protein synthesizing functions of that subunit. This is Large ribosomal subunit protein bL20 from Desulfosudis oleivorans (strain DSM 6200 / JCM 39069 / Hxd3) (Desulfococcus oleovorans).